Here is a 250-residue protein sequence, read N- to C-terminus: MENPNHCPLEDIQVNPWKTPQSKARVITLRIDDPNEINNLLSINEIENTNYLLQAIMLANAFQKALVPTSTEFAEDALQFSMTKGLEVANTISPPGAVVQYVDQNVSQTNNQVSAMINKVLDVLKSILGVALGQSVIEQLTSAVTNTFTNLNTQKNEAWIFWGRETSTQTNYTYNVLFAIQNGQTGGVMYCVPVGFEIKVSAVKERVLFLTIQDSASYNVNIQSLKFAQPLVSASEYPIADLTSAINGTL.

It belongs to the cyt1/cyt2 endotoxin family. In terms of processing, active after proteolytic processing.

In terms of biological role, kills the larvae of dipteran insects by making pores in the epithelial cell membrane of the insect midgut. The chain is Type-1Ab cytolytic delta-endotoxin (cyt1Ab1) from Bacillus thuringiensis subsp. medellin.